Consider the following 341-residue polypeptide: COP9 signalosome complex subunit 6 (341 aa).

Residues 1–43 (MEQMEVDVDMSAKPSTSSSAAAGSSMAVDKTADQNPQPQGNIM) are disordered. Over residues 11–27 (SAKPSTSSSAAAGSSMA) the composition is skewed to low complexity. Residues 54 to 188 (ISLHPLVIMN…LKLFESLIDL (135 aa)) enclose the MPN domain.

Belongs to the peptidase M67A family. CSN6 subfamily. As to quaternary structure, component of the CSN complex, probably composed of CSN1b, alien/CSN2, CSN3, CSN4, CSN5, CSN6, CSN7 and CSN8.

It is found in the cytoplasm. It localises to the nucleus. Functionally, component of the COP9 signalosome complex (CSN), a complex involved in various cellular and developmental processes. The CSN complex is an essential regulator of the ubiquitin (Ubl) conjugation pathway by mediating the deneddylation of the cullin subunits of the SCF-type E3 ligase complexes, leading to decrease the Ubl ligase activity of SCF. The CSN complex plays an essential role in oogenesis and embryogenesis and is required for proper photoreceptor R cell differentiation and promote lamina glial cell migration or axon targeting. It also promotes Ubl-dependent degradation of cyclin E (CycE) during early oogenesis. This is COP9 signalosome complex subunit 6 (CSN6) from Drosophila melanogaster (Fruit fly).